The primary structure comprises 485 residues: Bifunctional protein GlmU (485 aa).

The tract at residues 1–241 (MSASDFSSAV…ARELAGVNDR (241 aa)) is pyrophosphorylase. UDP-N-acetyl-alpha-D-glucosamine contacts are provided by residues 13 to 16 (LAAG), K27, Q84, and 89 to 90 (GT). D114 contacts Mg(2+). UDP-N-acetyl-alpha-D-glucosamine is bound by residues G151, E166, N181, and N239. N239 provides a ligand contact to Mg(2+). The linker stretch occupies residues 242-262 (VQLAEAGAELNRRTVIAAMRG). The N-acetyltransferase stretch occupies residues 263–485 (GATIVDPATT…AAQNVHNQEG (223 aa)). Positions 344 and 362 each coordinate UDP-N-acetyl-alpha-D-glucosamine. Catalysis depends on H374, which acts as the Proton acceptor. Y377 and N388 together coordinate UDP-N-acetyl-alpha-D-glucosamine. Residues A391, 397 to 398 (NY), S416, and A434 each bind acetyl-CoA. A disordered region spans residues 465–485 (RPGTAAAQAAEAAQNVHNQEG). Positions 469–478 (AAAQAAEAAQ) are enriched in low complexity.

The protein in the N-terminal section; belongs to the N-acetylglucosamine-1-phosphate uridyltransferase family. It in the C-terminal section; belongs to the transferase hexapeptide repeat family. Homotrimer. It depends on Mg(2+) as a cofactor.

The protein resides in the cytoplasm. It carries out the reaction alpha-D-glucosamine 1-phosphate + acetyl-CoA = N-acetyl-alpha-D-glucosamine 1-phosphate + CoA + H(+). The catalysed reaction is N-acetyl-alpha-D-glucosamine 1-phosphate + UTP + H(+) = UDP-N-acetyl-alpha-D-glucosamine + diphosphate. It functions in the pathway nucleotide-sugar biosynthesis; UDP-N-acetyl-alpha-D-glucosamine biosynthesis; N-acetyl-alpha-D-glucosamine 1-phosphate from alpha-D-glucosamine 6-phosphate (route II): step 2/2. It participates in nucleotide-sugar biosynthesis; UDP-N-acetyl-alpha-D-glucosamine biosynthesis; UDP-N-acetyl-alpha-D-glucosamine from N-acetyl-alpha-D-glucosamine 1-phosphate: step 1/1. The protein operates within bacterial outer membrane biogenesis; LPS lipid A biosynthesis. Catalyzes the last two sequential reactions in the de novo biosynthetic pathway for UDP-N-acetylglucosamine (UDP-GlcNAc). The C-terminal domain catalyzes the transfer of acetyl group from acetyl coenzyme A to glucosamine-1-phosphate (GlcN-1-P) to produce N-acetylglucosamine-1-phosphate (GlcNAc-1-P), which is converted into UDP-GlcNAc by the transfer of uridine 5-monophosphate (from uridine 5-triphosphate), a reaction catalyzed by the N-terminal domain. This Corynebacterium glutamicum (strain R) protein is Bifunctional protein GlmU.